A 391-amino-acid polypeptide reads, in one-letter code: Aspartate carbamoyltransferase 3, chloroplastic (391 aa).

A chloroplast-targeting transit peptide spans 1–69 (MTASSSLFSC…SKCDKMIKTR (69 aa)). Carbamoyl phosphate-binding residues include arginine 137 and threonine 138. Residues arginine 137 and threonine 138 each coordinate UMP. Lysine 167 provides a ligand contact to L-aspartate. Carbamoyl phosphate is bound by residues arginine 188, histidine 216, and glutamine 219. Positions 188 and 216 each coordinate UMP. 2 residues coordinate UMP: arginine 249 and arginine 311. L-aspartate is bound by residues arginine 249 and arginine 311. The carbamoyl phosphate site is built by leucine 351 and proline 352.

Belongs to the aspartate/ornithine carbamoyltransferase superfamily. ATCase family. As to quaternary structure, homotrimer.

It is found in the plastid. It localises to the chloroplast. It carries out the reaction carbamoyl phosphate + L-aspartate = N-carbamoyl-L-aspartate + phosphate + H(+). The protein operates within pyrimidine metabolism; UMP biosynthesis via de novo pathway; (S)-dihydroorotate from bicarbonate: step 2/3. Its activity is regulated as follows. Feedback inhibited by UMP. Functionally, catalyzes the condensation of carbamoyl phosphate and aspartate to form carbamoyl aspartate and inorganic phosphate, the committed step in the de novo pyrimidine nucleotide biosynthesis pathway. The polypeptide is Aspartate carbamoyltransferase 3, chloroplastic (PYRB3) (Pisum sativum (Garden pea)).